We begin with the raw amino-acid sequence, 157 residues long: NudC domain-containing protein 2 (157 aa).

Ser2 is subject to N-acetylserine. In terms of domain architecture, CS spans 14-104 (CATPWGQWYQ…DAANCWTSLL (91 aa)). The interval 134-157 (FDFSGAEISGNYTKGGPDFSNLEK) is disordered. The residue at position 142 (Ser142) is a Phosphoserine. Tyr145 is subject to Phosphotyrosine.

In terms of assembly, interacts with LIS1.

Its subcellular location is the chromosome. The protein localises to the centromere. The protein resides in the kinetochore. It is found in the cytoplasm. It localises to the cytoskeleton. Its subcellular location is the microtubule organizing center. The protein localises to the centrosome. The protein resides in the spindle pole. May regulate the LIS1/dynein pathway by stabilizing LIS1 with Hsp90 chaperone. This is NudC domain-containing protein 2 (Nudcd2) from Rattus norvegicus (Rat).